Reading from the N-terminus, the 377-residue chain is Alkane 1-monooxygenase 2 (377 aa).

The next 4 helical transmembrane spans lie at 17 to 37 (GYWI…WSLG), 43 to 63 (AWPW…DAIV), 87 to 107 (VLSL…GWIL), and 116 to 136 (VGQL…GITV). Positions 138, 142, 168, 172, and 173 each coordinate Fe cation. A helical membrane pass occupies residues 236 to 256 (ALFLLGFSLAFGWLGAIFFLG). Residues H312, H315, and H316 each coordinate Fe cation.

The protein belongs to the fatty acid desaturase type 1 family. AlkB subfamily. Requires Fe(3+) as cofactor.

The protein resides in the cell inner membrane. The enzyme catalyses octane + 2 reduced [rubredoxin] + O2 + 2 H(+) = 2 oxidized [rubredoxin] + octan-1-ol + H2O. The protein operates within hydrocarbon metabolism; alkane degradation. Functionally, catalyzes the hydroxylation of n-alkanes in the presence of a NADH-rubredoxin reductase and rubredoxin. It preferably hydroxylases C12-C20 hydrocarbons. This Pseudomonas aeruginosa (strain ATCC 15692 / DSM 22644 / CIP 104116 / JCM 14847 / LMG 12228 / 1C / PRS 101 / PAO1) protein is Alkane 1-monooxygenase 2 (alkB2).